Reading from the N-terminus, the 50-residue chain is Photosystem II reaction center protein K (50 aa).

Residues 1-13 constitute a propeptide that is removed on maturation; that stretch reads MLNLNFTNITVMG. A helical membrane pass occupies residues 25 to 45; that stretch reads IVDILPIIPILFFLLAFVWQA.

The protein belongs to the PsbK family. PSII is composed of 1 copy each of membrane proteins PsbA, PsbB, PsbC, PsbD, PsbE, PsbF, PsbH, PsbI, PsbJ, PsbK, PsbL, PsbM, PsbT, PsbY, PsbZ, Psb30/Ycf12, at least 3 peripheral proteins of the oxygen-evolving complex and a large number of cofactors. It forms dimeric complexes.

It localises to the plastid. The protein localises to the chloroplast thylakoid membrane. Its function is as follows. One of the components of the core complex of photosystem II (PSII). PSII is a light-driven water:plastoquinone oxidoreductase that uses light energy to abstract electrons from H(2)O, generating O(2) and a proton gradient subsequently used for ATP formation. It consists of a core antenna complex that captures photons, and an electron transfer chain that converts photonic excitation into a charge separation. This chain is Photosystem II reaction center protein K, found in Euglena myxocylindracea.